Consider the following 361-residue polypeptide: Replication-associated protein (361 aa).

Residues arginine 8–phenylalanine 116 form the CRESS-DNA virus Rep endonuclease domain. Positions phenylalanine 15–tyrosine 18 match the RCR-1 motif. Residues glutamate 49, histidine 57, and histidine 59 each contribute to the a divalent metal cation site. The RCR-2 signature appears at histidine 57–histidine 59. Tyrosine 103 (for DNA cleavage activity) is an active-site residue. The RCR-3 motif lies at tyrosine 103–lysine 106. Position 107 (aspartate 107) interacts with a divalent metal cation. A binding to RBR1 region spans residues lysine 143–lysine 153. An oligomerization region spans residues lysine 156–proline 176. Glycine 221 to threonine 228 contributes to the ATP binding site.

Belongs to the geminiviridae Rep protein family. Homooligomer. Interacts with the replication enhancer protein (REn). Interacts with host retinoblastoma-related protein 1 (RBR1), and may thereby induce the transcription of host replicative enzymes even if the cell is not dividing anymore. Interacts with host PCNA. Interacts with host SCE1 protein. Requires Mg(2+) as cofactor. The cofactor is Mn(2+).

It localises to the host nucleus. Essential for the replication of viral ssDNA. The closed circular ssDNA genome is first converted to a superhelical dsDNA. Rep binds a specific region at the genome origin of replication. It introduces an endonucleolytic nick within the conserved sequence 5'-TAATATTAC-3' in the intergenic region of the genome present in all geminiviruses, thereby initiating the rolling circle replication (RCR). Following cleavage, binds covalently to the 5'-phosphate of DNA as a tyrosyl ester. The cleavage gives rise to a free 3'-OH that serves as a primer for the cellular DNA polymerase. The polymerase synthesizes the (+) strand DNA by rolling circle mechanism. After one round of replication, a Rep-catalyzed nucleotidyl transfer reaction releases a circular single-stranded virus genome, thereby terminating the replication. Displays origin-specific DNA cleavage, nucleotidyl transferase, ATPase and helicase activities. The protein is Replication-associated protein of Tomato yellow leaf curl China virus (TYLCCNV).